Here is a 515-residue protein sequence, read N- to C-terminus: FAD-dependent oxidoreductase domain-containing protein 1 homolog (515 aa).

Residues 18–37 (AGATSNGSGSSGGDKSGEDL) form a disordered region. A helical membrane pass occupies residues 100–116 (VLIIGGGGVGSSIAYWL).

In terms of assembly, associates with mitochondrial complex I assembly intermediates during its biogenesis. The cofactor is FAD.

The protein resides in the mitochondrion inner membrane. Involved in the assembly of the mitochondrial membrane respiratory chain NADH dehydrogenase (Complex I). The polypeptide is FAD-dependent oxidoreductase domain-containing protein 1 homolog (Drosophila melanogaster (Fruit fly)).